Reading from the N-terminus, the 602-residue chain is Auxin response factor 18 (602 aa).

The segment at residues 128 to 230 is a DNA-binding region (TF-B3); the sequence is FVKILTASDT…DLRVGVRRLA (103 aa). The interval 359–396 is disordered; sequence TSPISTPAQQPQSKCKRSRPIEPSVKTPAPPSFLYSLP. Residues 360-371 show a composition bias toward polar residues; sequence SPISTPAQQPQS. The 93-residue stretch at 489-581 folds into the PB1 domain; sequence RSRTKVQMQG…EVKKMTTKLK (93 aa).

It belongs to the ARF family. In terms of assembly, homodimers and heterodimers.

It is found in the nucleus. Auxin response factors (ARFs) are transcriptional factors that bind specifically to the DNA sequence 5'-TGTCTC-3' found in the auxin-responsive promoter elements (AuxREs). Could act as transcriptional activator or repressor. Formation of heterodimers with Aux/IAA proteins may alter their ability to modulate early auxin response genes expression. This Arabidopsis thaliana (Mouse-ear cress) protein is Auxin response factor 18 (ARF18).